An 89-amino-acid polypeptide reads, in one-letter code: Cell division topological specificity factor (89 aa).

It belongs to the MinE family.

In terms of biological role, prevents the cell division inhibition by proteins MinC and MinD at internal division sites while permitting inhibition at polar sites. This ensures cell division at the proper site by restricting the formation of a division septum at the midpoint of the long axis of the cell. This Photorhabdus laumondii subsp. laumondii (strain DSM 15139 / CIP 105565 / TT01) (Photorhabdus luminescens subsp. laumondii) protein is Cell division topological specificity factor.